The following is a 447-amino-acid chain: GTPase Der (447 aa).

EngA-type G domains lie at 4–165 and 180–357; these read KIIT…PEEE and LQIV…KIWN. Residues 10 to 17, 57 to 61, 119 to 122, 186 to 193, 233 to 237, and 298 to 301 contribute to the GTP site; these read GRPNVGKS, DTPGL, NKCE, GRPNAGKS, DTAGL, and NKWD. One can recognise a KH-like domain in the interval 358–443; it reads KKITTSKLNE…PIRFTYVKTK (86 aa).

The protein belongs to the TRAFAC class TrmE-Era-EngA-EngB-Septin-like GTPase superfamily. EngA (Der) GTPase family. As to quaternary structure, associates with the 50S ribosomal subunit.

GTPase that plays an essential role in the late steps of ribosome biogenesis. The polypeptide is GTPase Der (Rickettsia felis (strain ATCC VR-1525 / URRWXCal2) (Rickettsia azadi)).